The chain runs to 356 residues: uncharacterized protein (356 aa).

37 to 44 (TGASSGIG) is a binding site for NADP(+). S168 serves as a coordination point for substrate. The Proton acceptor role is filled by Y181.

This sequence belongs to the short-chain dehydrogenases/reductases (SDR) family.

This is an uncharacterized protein from Bacillus subtilis (strain 168).